A 1132-amino-acid chain; its full sequence is MELFQAKDHYILQQGERALWCSRRDGGLQLRPATDLLLAWNPICLGLVEGVIGKIQLHSDLPWWLILIRQKALVGKLPGDHEVCKVTKIAVLSLSEMEPQELELELCKKHHFGINKPEKIIPSPDDSKFLLKTFTNIKSNVSAPNKKKVKESKEKEKLERRLLEELLKMFMDSESFYYSLTYDLTNSVQRQSTGERDGRPLWQKVDDRFFWNKYMIQALTEIGTPDVDFWIIPIIQGFVQIEELVVNYNESSDDDKSSPETPPQDSTCVDDIHPRFLVALISRRSRHRAGMRYKRRGVDKNGNVANYVETEQLIHVHHHTLSFIQTRGSVPVFWSQVGYRYNPRPRLDKSEKETVDCFCAHFEEQLKIYKKQVIVNLVDQAGREKIIGDAYLKQVLLFNNPKLTYVSFDFHEHCRGMKFENVQTLTDAIHDIIIDMKWCWVDQAGVICKQEGIFRVNCMDCLDRTNVVQAAIARVVMEQQLKKLGVMPPEQPLPVKCNRTYQIMWANNGDSISRQYAGTAALKGDFTRTGERKLAGVMKDGVNSANRYYLSRFKDAYRQAVIDLMQGVPVTEDLYSIFTKEKEHEALHKESQRSHQELISQLLQSYMQLLLPGDEKFHGGWALVDCDPSLTDAAHRDVEVLLLLSNAAYYVAYYDDEVDKVNQYQRLGLEDLERIEIGPEPTLFGKPKFSCMRLHYRCKEAGGYFHTLRAVPRSPEEDGKDTLQCIAEMLQITKQAMGLDVPIIEKKLERKSSKPHEDIIGIRSQNQGSLAQGKSFLMSKFSSLNQKVKQTKSNVNIGNLRKLGNFTKPEMKVNFLKPNLKVNLWKSDSSLETMENPGVMGNKVQGESDGDISSDNDSYHSDEFLTNSKSEEDKQLANSLESVGPIDYILPSCGIIVSAPRLGSRSQSASSIDVSTHAPSEAAAGPGSELGKGLESPLKKSPSADSIHTRTGFTKPMDVYCQRFVQDAQNKMNDLSEIRSVAQKSEEGSHKTNRVSNEETQSEPMGQTPPRPSQLNVSCSVAGPPFLSVEPVHSVLSQKTPSSGSSLLELEAGLCVTPSSESSSSRAVSPFAKIRSSMVQVANITQAGLTHGINLAVAKVQKSPAEPEAVNEIQQNELKNMFTQCQTRIIQI.

Positions 167–518 (LKMFMDSESF…GDSISRQYAG (352 aa)) constitute an SAC domain. Residues 250–269 (ESSDDDKSSPETPPQDSTCV) form a disordered region. Residues 593-760 (RSHQELISQL…KSSKPHEDII (168 aa)) form the hSac2 domain. Phosphoserine occurs at positions 714, 827, and 830. Residues 833-872 (TMENPGVMGNKVQGESDGDISSDNDSYHSDEFLTNSKSEE) are disordered. Positions 857–872 (DSYHSDEFLTNSKSEE) are enriched in basic and acidic residues. Residues Ser879, Ser882, Ser908, and Ser911 each carry the phosphoserine modification. Composition is skewed to polar residues over residues 908 to 918 (SASSIDVSTHA) and 994 to 1005 (RVSNEETQSEPM). 2 disordered regions span residues 908–951 (SASS…HTRT) and 981–1016 (VAQK…SQLN). At Ser1103 the chain carries Phosphoserine.

In terms of assembly, homodimer. Interacts with OCRL and RAB5. Interacts with INPP5B and INPP4A. Interacts with STAT3; the interaction is independent of STAT3 'Tyr-705' phosphorylation status. Highly expressed in brain and hypothalamus, expressed in lung and pancreas, and detected at low levels in liver and heart (at protein level).

Its subcellular location is the membrane. It localises to the clathrin-coated pit. The protein localises to the early endosome. It is found in the recycling endosome. The catalysed reaction is a myo-inositol phosphate + H2O = myo-inositol + phosphate. In terms of biological role, inositol 4-phosphatase which mainly acts on phosphatidylinositol 4-phosphate. May be functionally linked to OCRL, which converts phosphatidylinositol 4,5-bisphosphate to phosphatidylinositol, for a sequential dephosphorylation of phosphatidylinositol 4,5-bisphosphate at the 5 and 4 position of inositol, thus playing an important role in the endocytic recycling. Regulator of TF:TFRC and integrins recycling pathway, is also involved in cell migration mechanisms. Modulates AKT/GSK3B pathway by decreasing AKT and GSK3B phosphorylation. Negatively regulates STAT3 signaling pathway through inhibition of STAT3 phosphorylation and translocation to the nucleus. Functionally important modulator of cardiac myocyte size and of the cardiac response to stress. May play a role as negative regulator of axon regeneration after central nervous system injuries. In Mus musculus (Mouse), this protein is Phosphatidylinositide phosphatase SAC2.